Reading from the N-terminus, the 150-residue chain is Azurin (150 aa).

An N-terminal signal peptide occupies residues 1-21 (MFKQVLGGMALMAAFSAPVLA). A Plastocyanin-like domain is found at 22 to 150 (AECSVDIAGT…LMKGTLKLVD (129 aa)). A disulfide bond links C24 and C47. Cu cation contacts are provided by H67, C133, H138, and M142.

Its subcellular location is the periplasm. The polypeptide is Azurin (Bordetella bronchiseptica (strain ATCC BAA-588 / NCTC 13252 / RB50) (Alcaligenes bronchisepticus)).